Reading from the N-terminus, the 239-residue chain is Small ribosomal subunit protein uS3 (239 aa).

The region spanning 39–107 (IREFIKEECK…ELHLNIVEVR (69 aa)) is the KH type-2 domain. Residues 212 to 221 (PQARDRKAQE) are compositionally biased toward basic and acidic residues. The interval 212–239 (PQARDRKAQELQDGPAPRGAGGNRRGDR) is disordered. Gly residues predominate over residues 230 to 239 (GAGGNRRGDR).

It belongs to the universal ribosomal protein uS3 family. Part of the 30S ribosomal subunit. Forms a tight complex with proteins S10 and S14.

Binds the lower part of the 30S subunit head. Binds mRNA in the 70S ribosome, positioning it for translation. This Ruegeria sp. (strain TM1040) (Silicibacter sp.) protein is Small ribosomal subunit protein uS3.